Reading from the N-terminus, the 428-residue chain is uncharacterized protein (428 aa).

Position 68 (His68) interacts with Zn(2+). The active-site Proton acceptor is Glu71. Zn(2+)-binding residues include His72 and Glu143.

This sequence belongs to the peptidase M16 family. Requires Zn(2+) as cofactor.

This is an uncharacterized protein from Bacillus subtilis (strain 168).